A 222-amino-acid chain; its full sequence is Large ribosomal subunit protein uL1 (222 aa).

This sequence belongs to the universal ribosomal protein uL1 family. Part of the 50S ribosomal subunit.

Functionally, binds directly to 23S rRNA. Probably involved in E site tRNA release. In terms of biological role, protein L1 is also a translational repressor protein, it controls the translation of its operon by binding to its mRNA. This chain is Large ribosomal subunit protein uL1, found in Pyrobaculum arsenaticum (strain DSM 13514 / JCM 11321 / PZ6).